A 793-amino-acid polypeptide reads, in one-letter code: Probable alpha-fucosidase A (793 aa).

The N-terminal stretch at 1 to 20 is a signal peptide; it reads MLISGSSAALCALALPFAAA. N30, N83, N100, N104, N123, N179, N199, N234, N323, N597, N622, N660, and N757 each carry an N-linked (GlcNAc...) asparagine glycan.

It belongs to the glycosyl hydrolase 95 family.

It localises to the secreted. It carries out the reaction an alpha-L-fucoside + H2O = L-fucose + an alcohol. Alpha-fucosidase involved in degradation of fucosylated xyloglucans. Hydrolyzes alpha-1,2-linked fucose. The polypeptide is Probable alpha-fucosidase A (afcA) (Aspergillus niger (strain ATCC MYA-4892 / CBS 513.88 / FGSC A1513)).